Here is a 126-residue protein sequence, read N- to C-terminus: UPF0102 protein gll3754 (126 aa).

Belongs to the UPF0102 family.

In Gloeobacter violaceus (strain ATCC 29082 / PCC 7421), this protein is UPF0102 protein gll3754.